A 154-amino-acid polypeptide reads, in one-letter code: Superoxide dismutase [Cu-Zn] (154 aa).

The Cu cation site is built by histidine 47, histidine 49, and histidine 64. A disulfide bond links cysteine 58 and cysteine 147. Residues histidine 64, histidine 72, histidine 81, and aspartate 84 each contribute to the Zn(2+) site. Histidine 121 is a binding site for Cu cation. A compositionally biased stretch (basic and acidic residues) spans 125 to 137; that stretch reads DDLGRGGNEESKK. The tract at residues 125-147 is disordered; that stretch reads DDLGRGGNEESKKTGNAGPRPAC. Arginine 144 contributes to the substrate binding site.

It belongs to the Cu-Zn superoxide dismutase family. Homodimer. Cu cation serves as cofactor. Zn(2+) is required as a cofactor.

The protein resides in the cytoplasm. The catalysed reaction is 2 superoxide + 2 H(+) = H2O2 + O2. Destroys radicals which are normally produced within the cells and which are toxic to biological systems. The chain is Superoxide dismutase [Cu-Zn] from Aspergillus niger (strain ATCC MYA-4892 / CBS 513.88 / FGSC A1513).